The primary structure comprises 131 residues: uncharacterized protein (131 aa).

This is an uncharacterized protein from Methanocaldococcus jannaschii (strain ATCC 43067 / DSM 2661 / JAL-1 / JCM 10045 / NBRC 100440) (Methanococcus jannaschii).